Consider the following 101-residue polypeptide: Small ribosomal subunit protein uS14 (101 aa).

This sequence belongs to the universal ribosomal protein uS14 family. In terms of assembly, part of the 30S ribosomal subunit. Contacts proteins S3 and S10.

Functionally, binds 16S rRNA, required for the assembly of 30S particles and may also be responsible for determining the conformation of the 16S rRNA at the A site. The polypeptide is Small ribosomal subunit protein uS14 (Pseudoalteromonas atlantica (strain T6c / ATCC BAA-1087)).